Reading from the N-terminus, the 347-residue chain is Protein RecA (347 aa).

G70 to T77 lines the ATP pocket.

The protein belongs to the RecA family.

It is found in the cytoplasm. Functionally, can catalyze the hydrolysis of ATP in the presence of single-stranded DNA, the ATP-dependent uptake of single-stranded DNA by duplex DNA, and the ATP-dependent hybridization of homologous single-stranded DNAs. It interacts with LexA causing its activation and leading to its autocatalytic cleavage. This is Protein RecA from Ruegeria pomeroyi (strain ATCC 700808 / DSM 15171 / DSS-3) (Silicibacter pomeroyi).